The sequence spans 1358 residues: DNA-directed RNA polymerase subunit beta (1358 aa).

This sequence belongs to the RNA polymerase beta chain family. The RNAP catalytic core consists of 2 alpha, 1 beta, 1 beta' and 1 omega subunit. When a sigma factor is associated with the core the holoenzyme is formed, which can initiate transcription.

It carries out the reaction RNA(n) + a ribonucleoside 5'-triphosphate = RNA(n+1) + diphosphate. Functionally, DNA-dependent RNA polymerase catalyzes the transcription of DNA into RNA using the four ribonucleoside triphosphates as substrates. The chain is DNA-directed RNA polymerase subunit beta from Francisella tularensis subsp. holarctica (strain FTNF002-00 / FTA).